The following is a 2863-amino-acid chain: Lipopolysaccharide-responsive and beige-like anchor protein (2863 aa).

3 disordered regions span residues 1–35, 969–1005, and 1018–1039; these read MASE…ALSL, VGSQ…ESAS, and EMKA…ETLT. Ala-2 bears the N-acetylalanine mark. Residues Ser-10, Ser-979, and Ser-1003 each carry the phosphoserine modification. Residues 985 to 1005 are compositionally biased toward polar residues; the sequence is FTTNGNENSSIEKTSSLESAS. Residues 1006–1053 adopt a coiled-coil conformation; the sequence is NIELQTTNTSYEEMKAEQENQELPDEGTLEETLTNETRNADDLEVSSD. The span at 1024-1034 shows a compositional bias: acidic residues; sequence ENQELPDEGTL. Phosphoserine is present on residues Ser-1100, Ser-1135, and Ser-1139. A compositionally biased stretch (basic and acidic residues) spans 1161 to 1176; it reads PVTEKQTDTETQDSKD. Positions 1161 to 1193 are disordered; that stretch reads PVTEKQTDTETQDSKDSGIQTMTASGSSAMSPE. Over residues 1177–1193 the composition is skewed to polar residues; it reads SGIQTMTASGSSAMSPE. 3 positions are modified to phosphoserine: Ser-1233, Ser-1247, and Ser-1261. The stretch at 1301-1343 is one WD 1 repeat; that stretch reads STVFRIPEFNWSQMHQRLLTDLLFSIETDIQMWRSHSTKTVMD. A phosphoserine mark is found at Ser-1488 and Ser-1498. The helical transmembrane segment at 1531-1548 threads the bilayer; the sequence is FLALAVVYFISVLMVSKY. Residues 1586–1599 show a composition bias toward low complexity; the sequence is LTTASVEESESTSS. 2 disordered regions span residues 1586–1668 and 1759–1789; these read LTTA…KATP and QASD…VSQD. Position 1605 is a phosphoserine (Ser-1605). Positions 1650 to 1664 are enriched in basic and acidic residues; the sequence is KSPETKNDRGNDLDT. Phosphoserine is present on residues Ser-1767, Ser-1770, and Ser-2064. Residues 1769–1789 show a composition bias toward polar residues; the sequence is GSRSSNAKLPSVPTVDSVSQD. The BEACH-type PH domain occupies 2073 to 2181; it reads NLAGPVSLST…TVKKVVNYLP (109 aa). The BEACH domain occupies 2200-2489; that stretch reads ASPRQLFKAS…QLLIEPHPPR (290 aa). Ser-2496 carries the phosphoserine modification. 5 WD repeats span residues 2591–2633, 2636–2679, 2695–2735, 2777–2816, and 2819–2858; these read DQSI…LIQV, GHWD…SGIG, GHDY…RTLE, ETDD…QLFA, and GCDA…WHHE.

As to quaternary structure, interacts with TOM1 and TOLLIP. As to expression, ubiquitous.

It localises to the cell membrane. The protein localises to the endoplasmic reticulum membrane. It is found in the golgi apparatus. Its subcellular location is the trans-Golgi network membrane. The protein resides in the lysosome membrane. Involved in coupling signal transduction and vesicle trafficking to enable polarized secretion and/or membrane deposition of immune effector molecules. Involved in phagophore growth during mitophagy by regulating ATG9A trafficking to mitochondria. The polypeptide is Lipopolysaccharide-responsive and beige-like anchor protein (Homo sapiens (Human)).